We begin with the raw amino-acid sequence, 438 residues long: Diaminopimelate decarboxylase (438 aa).

Lys-73 is modified (N6-(pyridoxal phosphate)lysine). Residues Ser-217, Gly-254, and 294–297 each bind pyridoxal 5'-phosphate; that span reads EPGR. Positions 297, 333, and 337 each coordinate substrate. Cys-362 (proton donor) is an active-site residue. 2 residues coordinate substrate: Glu-363 and Tyr-391. Tyr-391 contributes to the pyridoxal 5'-phosphate binding site.

It belongs to the Orn/Lys/Arg decarboxylase class-II family. LysA subfamily. In terms of assembly, homodimer. The cofactor is pyridoxal 5'-phosphate.

It catalyses the reaction meso-2,6-diaminopimelate + H(+) = L-lysine + CO2. It functions in the pathway amino-acid biosynthesis; L-lysine biosynthesis via DAP pathway; L-lysine from DL-2,6-diaminopimelate: step 1/1. Competitively inhibited by the substrate analog azelaic acid in vitro but not in vivo. Functionally, specifically catalyzes the decarboxylation of meso-diaminopimelate (meso-DAP) to L-lysine. The sequence is that of Diaminopimelate decarboxylase from Methanocaldococcus jannaschii (strain ATCC 43067 / DSM 2661 / JAL-1 / JCM 10045 / NBRC 100440) (Methanococcus jannaschii).